Reading from the N-terminus, the 118-residue chain is Eukaryotic translation initiation factor 4E-binding protein 1 (118 aa).

Composition is skewed to polar residues over residues 1 to 12 (MSGGSSCSQTPS) and 34 to 48 (YSTT…TTPG). Disordered regions lie at residues 1-20 (MSGG…ATRR) and 25-48 (DGVQ…TTPG). The residue at position 2 (Ser2) is an N-acetylserine. A Phosphothreonine; by MTOR modification is found at Thr37. Thr41 is subject to Phosphothreonine. Ser44 carries the post-translational modification Phosphoserine. Thr46 is modified (phosphothreonine; by MTOR). Thr50 bears the Phosphothreonine mark. At Tyr54 the chain carries Phosphotyrosine. The short motif at 54 to 60 (YDRKFLM) is the YXXXXLphi motif element. Lys57 is covalently cross-linked (Glycyl lysine isopeptide (Lys-Gly) (interchain with G-Cter in ubiquitin)). Residues 64 to 118 (NSPVTKTPPRDLPTIPGVTSPSSDEPPMEASQSHLRNSPEDKRAGGEESQFEMDI) form a disordered region. Ser65 bears the Phosphoserine; by DYRK2, MAPK1, MAPK3 and MTOR mark. The residue at position 70 (Thr70) is a Phosphothreonine; by MTOR. Phosphothreonine is present on Thr77. Phosphoserine is present on residues Ser83 and Ser96. Residues 100–109 (NSPEDKRAGG) show a composition bias toward basic and acidic residues. Residue Ser101 is modified to Phosphoserine; by DYRK2. Ser112 is modified (phosphoserine). A TOS motif motif is present at residues 114 to 118 (FEMDI).

The protein belongs to the eIF4E-binding protein family. As to quaternary structure, hypophosphorylated EIF4EBP1 competes with EIF4G1/EIF4G3 to interact with EIF4E; insulin stimulated MAP-kinase (MAPK1 and MAPK3) or mTORC1 phosphorylation of EIF4EBP1 causes dissociation of the complex allowing EIF4G1/EIF4G3 to bind and consequent initiation of translation. Interacts (via TOS motif) with RPTOR; promoting phosphorylation by mTORC1. Post-translationally, phosphorylated on serine and threonine residues in response to insulin, EGF and PDGF. Phosphorylation at Thr-37, Thr-46, Ser-65 and Thr-70, corresponding to the hyperphosphorylated form, is regulated by mTORC1 and abolishes binding to EIF4E. In terms of processing, ubiquitinated: when eIF4E levels are low, hypophosphorylated form is ubiquitinated by the BCR(KLHL25) complex, leading to its degradation and serving as a homeostatic mechanism to maintain translation and prevent eIF4E inhibition when eIF4E levels are low. Not ubiquitinated when hyperphosphorylated (at Thr-37, Thr-46, Ser-65 and Thr-70) or associated with eIF4E.

The protein resides in the cytoplasm. Its subcellular location is the nucleus. Functionally, repressor of translation initiation that regulates EIF4E activity by preventing its assembly into the eIF4F complex: hypophosphorylated form competes with EIF4G1/EIF4G3 and strongly binds to EIF4E, leading to repress translation. In contrast, hyperphosphorylated form dissociates from EIF4E, allowing interaction between EIF4G1/EIF4G3 and EIF4E, leading to initiation of translation. Mediates the regulation of protein translation by hormones, growth factors and other stimuli that signal through the MAP kinase and mTORC1 pathways. This Homo sapiens (Human) protein is Eukaryotic translation initiation factor 4E-binding protein 1 (EIF4EBP1).